Here is a 233-residue protein sequence, read N- to C-terminus: Octanoyltransferase (233 aa).

A BPL/LPL catalytic domain is found at 38–218 (AGGPDTLLLL…LVCDALDGVL (181 aa)). Over residues 57–66 (RRTEPHERPL) the composition is skewed to basic and acidic residues. The disordered stretch occupies residues 57 to 77 (RRTEPHERPLDGTPVVDTDRG). Residues 76–83 (RGGKITWH), 148–150 (AIG), and 161–163 (GFA) contribute to the substrate site. The active-site Acyl-thioester intermediate is Cys-179.

It belongs to the LipB family.

It localises to the cytoplasm. The catalysed reaction is octanoyl-[ACP] + L-lysyl-[protein] = N(6)-octanoyl-L-lysyl-[protein] + holo-[ACP] + H(+). Its pathway is protein modification; protein lipoylation via endogenous pathway; protein N(6)-(lipoyl)lysine from octanoyl-[acyl-carrier-protein]: step 1/2. In terms of biological role, catalyzes the transfer of endogenously produced octanoic acid from octanoyl-acyl-carrier-protein onto the lipoyl domains of lipoate-dependent enzymes. Lipoyl-ACP can also act as a substrate although octanoyl-ACP is likely to be the physiological substrate. In Mycobacterium avium (strain 104), this protein is Octanoyltransferase.